The chain runs to 97 residues: YcgL domain-containing protein PP_4590 (97 aa).

In terms of domain architecture, YcgL spans arginine 3 to proline 87.

This is YcgL domain-containing protein PP_4590 from Pseudomonas putida (strain ATCC 47054 / DSM 6125 / CFBP 8728 / NCIMB 11950 / KT2440).